Here is a 253-residue protein sequence, read N- to C-terminus: Ubiquinone/menaquinone biosynthesis C-methyltransferase UbiE (253 aa).

Residues threonine 76, aspartate 97, and 125 to 126 (NA) contribute to the S-adenosyl-L-methionine site.

The protein belongs to the class I-like SAM-binding methyltransferase superfamily. MenG/UbiE family.

The catalysed reaction is a 2-demethylmenaquinol + S-adenosyl-L-methionine = a menaquinol + S-adenosyl-L-homocysteine + H(+). It catalyses the reaction a 2-methoxy-6-(all-trans-polyprenyl)benzene-1,4-diol + S-adenosyl-L-methionine = a 5-methoxy-2-methyl-3-(all-trans-polyprenyl)benzene-1,4-diol + S-adenosyl-L-homocysteine + H(+). It participates in quinol/quinone metabolism; menaquinone biosynthesis; menaquinol from 1,4-dihydroxy-2-naphthoate: step 2/2. The protein operates within cofactor biosynthesis; ubiquinone biosynthesis. Functionally, methyltransferase required for the conversion of demethylmenaquinol (DMKH2) to menaquinol (MKH2) and the conversion of 2-polyprenyl-6-methoxy-1,4-benzoquinol (DDMQH2) to 2-polyprenyl-3-methyl-6-methoxy-1,4-benzoquinol (DMQH2). This chain is Ubiquinone/menaquinone biosynthesis C-methyltransferase UbiE, found in Bradyrhizobium diazoefficiens (strain JCM 10833 / BCRC 13528 / IAM 13628 / NBRC 14792 / USDA 110).